Consider the following 217-residue polypeptide: 7-cyano-7-deazaguanine synthase (217 aa).

10 to 20 is a binding site for ATP; the sequence is FSGGQDSTTCL. The Zn(2+) site is built by cysteine 185, cysteine 194, cysteine 197, and cysteine 200.

The protein belongs to the QueC family. Homodimer. Requires Zn(2+) as cofactor.

It carries out the reaction 7-carboxy-7-deazaguanine + NH4(+) + ATP = 7-cyano-7-deazaguanine + ADP + phosphate + H2O + H(+). Its pathway is purine metabolism; 7-cyano-7-deazaguanine biosynthesis. Functionally, catalyzes the ATP-dependent conversion of 7-carboxy-7-deazaguanine (CDG) to 7-cyano-7-deazaguanine (preQ(0)). The polypeptide is 7-cyano-7-deazaguanine synthase (Streptococcus mutans serotype c (strain ATCC 700610 / UA159)).